We begin with the raw amino-acid sequence, 213 residues long: THAP domain-containing protein 1 (213 aa).

The segment at 1–81 (MVQSCSAYGC…LKENAVPTIF (81 aa)) adopts a THAP-type zinc-finger fold. Positions 134-137 (DHNY) match the HCFC1-binding motif (HBM) motif. The interval 139 to 185 (VEDTMHQRKRIHQLEQQVEKLRKKLKTAQQRCRRQERQLEKLKEVVH) is involved in homodimer formation. Residues 139 to 190 (VEDTMHQRKRIHQLEQQVEKLRKKLKTAQQRCRRQERQLEKLKEVVHFQKEK) adopt a coiled-coil conformation.

The protein belongs to the THAP1 family. In terms of assembly, homodimer. Interacts with PAWR. Component of a THAP1/THAP3-HCFC1-OGT complex that contains, either THAP1 or THAP3, HCFC1 and OGT. Interacts with OGT. Interacts (via the HBM) with HCFC1 (via the Kelch-repeat domain); the interaction recruits HCFC1 to the RRM1 promoter. In terms of tissue distribution, highly expressed in heart, skeletal muscle, kidney and liver. Weaker expression in brain and placenta.

Its subcellular location is the nucleus. The protein resides in the nucleoplasm. The protein localises to the PML body. Its function is as follows. DNA-binding transcription regulator that regulates endothelial cell proliferation and G1/S cell-cycle progression. Specifically binds the 5'-[AT]NTNN[GT]GGCA[AGT]-3' core DNA sequence and acts by modulating expression of pRB-E2F cell-cycle target genes, including RRM1. Component of a THAP1/THAP3-HCFC1-OGT complex that is required for the regulation of the transcriptional activity of RRM1. May also have pro-apoptotic activity by potentiating both serum-withdrawal and TNF-induced apoptosis. The polypeptide is THAP domain-containing protein 1 (THAP1) (Homo sapiens (Human)).